The following is a 64-amino-acid chain: Large ribosomal subunit protein bL35 (64 aa).

Belongs to the bacterial ribosomal protein bL35 family.

The polypeptide is Large ribosomal subunit protein bL35 (Colwellia psychrerythraea (strain 34H / ATCC BAA-681) (Vibrio psychroerythus)).